The chain runs to 223 residues: Cytotoxic T-lymphocyte protein 4 (223 aa).

A signal peptide spans M1–S35. The Ig-like V-type domain occupies E36–N145. The Extracellular segment spans residues E36–D161. The segment at V46–S50 is homodimerization. 2 disulfides stabilise this stretch: C58-C129 and C85-C103. 2 N-linked (GlcNAc...) asparagine glycosylation sites follow: N108 and N113. An important for interaction with CD80 and CD86 region spans residues M134 to Y139. Residue N145 is glycosylated (N-linked (GlcNAc...) asparagine). The segment at Y150–E155 is homodimerization. The chain crosses the membrane as a helical span at residues F162–S182. The Cytoplasmic segment spans residues A183–N223. Y201 carries the post-translational modification Phosphotyrosine; by TXK and JAK2.

In terms of assembly, homodimer; disulfide-linked. Binds to CD80/B7-1 and CD86/B7.2. Interacts with ICOSLG. In terms of processing, N-glycosylation is important for dimerization. Post-translationally, phosphorylation at Tyr-201 prevents binding to the AP-2 adapter complex, blocks endocytosis, and leads to retention of CTLA4 on the cell surface. In terms of tissue distribution, widely expressed with highest levels in lymphoid tissues.

The protein localises to the cell membrane. Functionally, inhibitory receptor acting as a major negative regulator of T-cell responses. The affinity of CTLA4 for its natural B7 family ligands, CD80 and CD86, is considerably stronger than the affinity of their cognate stimulatory coreceptor CD28. The polypeptide is Cytotoxic T-lymphocyte protein 4 (Ctla4) (Mus musculus (Mouse)).